We begin with the raw amino-acid sequence, 2035 residues long: Ral GTPase-activating protein subunit alpha-1 (2035 aa).

Positions 343 to 384 (LVSREESKNDTVDKADKTAEPEQSHSNTSTLTEREPSSSSLC) are disordered. Residues 345-365 (SREESKNDTVDKADKTAEPEQ) are compositionally biased toward basic and acidic residues. The segment covering 366-384 (SHSNTSTLTEREPSSSSLC) has biased composition (polar residues). A phosphoserine mark is found at Ser710 and Ser720. Residues 714–754 (SFSRGWSRDQPGQAPMRQRSATTTGSPGTEKARSIVRQKTV) form a disordered region. Thr753 carries the phosphothreonine modification. The residue at position 772 (Ser772) is a Phosphoserine. A Phosphothreonine modification is found at Thr777. Residue Ser796 is modified to Phosphoserine. The segment covering 807–817 (ERAKVNKEDTS) has biased composition (basic and acidic residues). Disordered stretches follow at residues 807–834 (ERAK…SANV) and 848–911 (SGNA…SHSD). Composition is skewed to polar residues over residues 824–833 (NSETGGSSAN) and 849–862 (GNAS…SSPG). Ser859, Ser860, and Ser863 each carry phosphoserine. Positions 894-911 (SPASAGSSDLMSSDSHSD) are enriched in low complexity. 4 positions are modified to phosphoserine: Ser985, Ser989, Ser993, and Ser999. The interval 986 to 1008 (ESASPVHSALGSRSQTPSPSTLN) is disordered. Residue Thr1001 is modified to Phosphothreonine. 2 positions are modified to phosphoserine: Ser1003 and Ser1477. The tract at residues 1326–2034 (FTNKTVAHVA…PYHHFPADAD (709 aa)) is minimal domain that binds to TCF3/E12. The stretch at 1713 to 1746 (SEKQENDVINAILKQYTEEKEFVEKHFNDLNMKA) forms a coiled coil. A Rap-GAP domain is found at 1795–2003 (LRNLDSRQCR…EERARYLQTI (209 aa)).

Component of the heterodimeric RalGAP1 complex with RALGAPB. Heterodimerization is required for activity. Interacts with the HLH region of TCF3/isoform E12. Highly expressed in brain, thymus and testis with lower levels in lung and spleen and barely detectable in heart or liver (at protein level).

The protein resides in the cytoplasm. It is found in the nucleus. Its function is as follows. Catalytic subunit of the heterodimeric RalGAP1 complex which acts as a GTPase activator for the Ras-like small GTPases RALA and RALB. This Rattus norvegicus (Rat) protein is Ral GTPase-activating protein subunit alpha-1 (Ralgapa1).